The sequence spans 1710 residues: Centrosomal protein of 152 kDa (1710 aa).

Disordered stretches follow at residues 1-27 (MSLDFGSVALPVQNEDEEYDEEDYERE), 39-79 (HDML…NEQM), and 108-139 (NRSKTEDRHPVYHPEEGGDEGGSGYSPPSKCE). The interval 1 to 60 (MSLDFGSVALPVQNEDEEYDEEDYEREKELQQLLTDLPHDMLDDDLSSPELQYSDCSEDG) is interaction with PLK4. Over residues 14–24 (NEDEEYDEEDY) the composition is skewed to acidic residues. Over residues 108 to 123 (NRSKTEDRHPVYHPEE) the composition is skewed to basic and acidic residues. The stretch at 234-490 (ENMQIIQLQV…ISLYESAAKL (257 aa)) forms a coiled coil. Positions 587 to 604 (DEKSIEVETKTDTSEKPK) are enriched in basic and acidic residues. Residues 587-611 (DEKSIEVETKTDTSEKPKNQLWPES) are disordered. 3 coiled-coil regions span residues 615 to 664 (DVVR…QDFD), 700 to 772 (EKQQ…LEKE), and 902 to 993 (AVSE…INEV). Positions 1120–1142 (ELSKDSASQGTGQGDPGPAAGHH) are disordered. Residues 1170–1241 (HCFQELEKAK…LEELQTLCKT (72 aa)) adopt a coiled-coil conformation. T1241 carries the phosphothreonine modification.

The protein belongs to the CEP152 family. Interacts (via N-terminus) with PLK4; the interaction is mutally exclusive with a PLK4:CEP192 interaction. Interacts (via C-terminus) with CPAP (via-N-terminus). Interacts with CINP. Interacts with CDK5RAP2, WDR62, CEP63 and CEP131. CEP63, CDK5RAP2, CEP152, WDR62 are proposed to form a stepwise assembled complex at the centrosome forming a ring near parental centrioles. Interacts with DEUP1; this interaction recruits CEP152 to the deuterosome. The interactions with CEP63 and DEUP1 are mutually exclusive. Interacts with CCDC66.

It is found in the cytoplasm. The protein resides in the cytoskeleton. It localises to the microtubule organizing center. Its subcellular location is the centrosome. The protein localises to the centriole. In terms of biological role, necessary for centrosome duplication; the function also seems to involve CEP63, CDK5RAP2 and WDR62 through a stepwise assembled complex at the centrosome that recruits CDK2 required for centriole duplication. Acts as a molecular scaffold facilitating the interaction of PLK4 and CPAP, 2 molecules involved in centriole formation. Proposed to snatch PLK4 away from PLK4:CEP92 complexes in early G1 daughter centriole and to reposition PLK4 at the outer boundary of a newly forming CEP152 ring structure. Also plays a key role in deuterosome-mediated centriole amplification in multiciliated that can generate more than 100 centrioles. Overexpression of CEP152 can drive amplification of centrioles. The protein is Centrosomal protein of 152 kDa of Homo sapiens (Human).